A 236-amino-acid polypeptide reads, in one-letter code: 28 kDa antigen (236 aa).

An N-terminal signal peptide occupies residues 1–22; that stretch reads MPNRRRCKLSTAISTVATLAIA. The interval 76–105 is disordered; sequence PVPSLTGTDDPGNGLRTPGLTSPDLTNQEL. Over residues 94-105 the composition is skewed to polar residues; that stretch reads GLTSPDLTNQEL.

It to M.tuberculosis ERP.

This is 28 kDa antigen from Mycobacterium leprae (strain TN).